The chain runs to 310 residues: UPF0324 membrane protein VP0936 (310 aa).

A run of 10 helical transmembrane segments spans residues 7 to 29 (PFGL…LVIG), 44 to 63 (IASF…GFGI), 75 to 94 (GIGL…SLIA), 104 to 126 (AYLI…APAI), 133 to 155 (IGLA…PVIG), 165 to 187 (FGTW…SAYG), 199 to 218 (LARA…IFSR), 228 to 250 (LVIP…FPQL), 257 to 279 (IFTI…ISIS), and 289 to 308 (LLFG…SWLV).

This sequence belongs to the UPF0324 family.

It localises to the cell membrane. The chain is UPF0324 membrane protein VP0936 from Vibrio parahaemolyticus serotype O3:K6 (strain RIMD 2210633).